The primary structure comprises 331 residues: Probable zinc-binding oxidoreductase, mitochondrial (331 aa).

The span at 1 to 29 shows a compositional bias: polar residues; sequence MASVTSVPKTGRSVNQDVPATTLTLQTRP. The interval 1-34 is disordered; sequence MASVTSVPKTGRSVNQDVPATTLTLQTRPTPAPN.

It belongs to the zinc-containing alcohol dehydrogenase family. Quinone oxidoreductase subfamily.

The protein resides in the mitochondrion. The polypeptide is Probable zinc-binding oxidoreductase, mitochondrial (Arthroderma benhamiae (strain ATCC MYA-4681 / CBS 112371) (Trichophyton mentagrophytes)).